A 740-amino-acid chain; its full sequence is Polyribonucleotide nucleotidyltransferase (740 aa).

Mg(2+) contacts are provided by D496 and D502. The 60-residue stretch at 563 to 622 folds into the KH domain; it reads PAIIRTSIHPDKIRDIIGPGGKIIKKLVEETGADIDIEDDGRVFIAAVDREKGKRALEII. The S1 motif domain maps to 632–706; that stretch reads GKLYNGKVTR…QQGRLKLSKK (75 aa). The tract at residues 707–740 is disordered; that stretch reads EAMRDMGLAPAESTSEQPEKRERRPFSRPKATKE. Residues 723–740 show a composition bias toward basic and acidic residues; the sequence is QPEKRERRPFSRPKATKE.

Belongs to the polyribonucleotide nucleotidyltransferase family. It depends on Mg(2+) as a cofactor.

The protein localises to the cytoplasm. It catalyses the reaction RNA(n+1) + phosphate = RNA(n) + a ribonucleoside 5'-diphosphate. In terms of biological role, involved in mRNA degradation. Catalyzes the phosphorolysis of single-stranded polyribonucleotides processively in the 3'- to 5'-direction. This is Polyribonucleotide nucleotidyltransferase from Desulforamulus reducens (strain ATCC BAA-1160 / DSM 100696 / MI-1) (Desulfotomaculum reducens).